The primary structure comprises 1399 residues: DNA-directed RNA polymerase subunit beta' (1399 aa).

Residues Cys70, Cys72, Cys85, and Cys88 each contribute to the Zn(2+) site. Positions 460, 462, and 464 each coordinate Mg(2+). 4 residues coordinate Zn(2+): Cys814, Cys888, Cys895, and Cys898.

The protein belongs to the RNA polymerase beta' chain family. The RNAP catalytic core consists of 2 alpha, 1 beta, 1 beta' and 1 omega subunit. When a sigma factor is associated with the core the holoenzyme is formed, which can initiate transcription. Mg(2+) is required as a cofactor. Requires Zn(2+) as cofactor.

The enzyme catalyses RNA(n) + a ribonucleoside 5'-triphosphate = RNA(n+1) + diphosphate. DNA-dependent RNA polymerase catalyzes the transcription of DNA into RNA using the four ribonucleoside triphosphates as substrates. The polypeptide is DNA-directed RNA polymerase subunit beta' (Pseudomonas fluorescens (strain SBW25)).